The primary structure comprises 671 residues: NADPH--cytochrome P450 reductase (671 aa).

Over 1–14 (MSAEHVEEVVSEEP) the chain is Lumenal. Residues 15–35 (FLGTLDIALLVVLLVGATWYF) form a helical membrane-spanning segment. The Cytoplasmic segment spans residues 36 to 671 (MRSRKKEEAP…QKRYSADVWS (636 aa)). One can recognise a Flavodoxin-like domain in the interval 77–221 (LVVFYGSQTG…DFITWKDRFW (145 aa)). FMN contacts are provided by residues 83–88 (SQTGTA), 135–138 (ATYG), 170–179 (LGNKTYEHYN), and Asp205. An FAD-binding FR-type domain is found at 276–515 (KNPFLASVIV…FIRKSQFRLP (240 aa)). Arg295 is an NADP(+) binding site. FAD contacts are provided by residues 451–454 (RYYS), 469–471 (TAV), Tyr475, and 485–488 (GVAT). NADP(+) is bound by residues Thr529, 589–590 (SR), 595–599 (KIYVT), and Asp632. Position 670 (Trp670) interacts with FAD.

It belongs to the NADPH--cytochrome P450 reductase family. The protein in the N-terminal section; belongs to the flavodoxin family. This sequence in the C-terminal section; belongs to the flavoprotein pyridine nucleotide cytochrome reductase family. FAD serves as cofactor. It depends on FMN as a cofactor.

The protein resides in the endoplasmic reticulum membrane. It catalyses the reaction 2 oxidized [cytochrome P450] + NADPH = 2 reduced [cytochrome P450] + NADP(+) + H(+). Functionally, this enzyme is required for electron transfer from NADP to cytochrome P450 in microsomes. It can also provide electron transfer to heme oxygenase and cytochrome B5. The chain is NADPH--cytochrome P450 reductase from Musca domestica (House fly).